The chain runs to 198 residues: Protein GrpE (198 aa).

Belongs to the GrpE family. Homodimer.

The protein localises to the cytoplasm. In terms of biological role, participates actively in the response to hyperosmotic and heat shock by preventing the aggregation of stress-denatured proteins, in association with DnaK and GrpE. It is the nucleotide exchange factor for DnaK and may function as a thermosensor. Unfolded proteins bind initially to DnaJ; upon interaction with the DnaJ-bound protein, DnaK hydrolyzes its bound ATP, resulting in the formation of a stable complex. GrpE releases ADP from DnaK; ATP binding to DnaK triggers the release of the substrate protein, thus completing the reaction cycle. Several rounds of ATP-dependent interactions between DnaJ, DnaK and GrpE are required for fully efficient folding. The polypeptide is Protein GrpE (Actinobacillus pleuropneumoniae serotype 5b (strain L20)).